The following is a 181-amino-acid chain: Alkyl hydroperoxide reductase AhpD (181 aa).

Cysteine 131 (proton donor) is an active-site residue. The cysteines at positions 131 and 134 are disulfide-linked. The Cysteine sulfenic acid (-SOH) intermediate role is filled by cysteine 134.

Belongs to the AhpD family.

The enzyme catalyses N(6)-[(R)-dihydrolipoyl]-L-lysyl-[lipoyl-carrier protein] + a hydroperoxide = N(6)-[(R)-lipoyl]-L-lysyl-[lipoyl-carrier protein] + an alcohol + H2O. Antioxidant protein with alkyl hydroperoxidase activity. Required for the reduction of the AhpC active site cysteine residues and for the regeneration of the AhpC enzyme activity. This chain is Alkyl hydroperoxide reductase AhpD, found in Rhodopseudomonas palustris (strain BisB18).